The chain runs to 169 residues: Probable GPI-anchored adhesin-like protein PGA22 (169 aa).

The first 18 residues, 1-18 (MKYSTLAWLVIASYTVFA), serve as a signal peptide directing secretion. N-linked (GlcNAc...) asparagine glycans are attached at residues Asn87, Asn104, Asn111, and Asn118. Gly140 is lipidated: GPI-anchor amidated glycine. The propeptide at 141–169 (PALTTTTVAEAFSLAAGASLGYLVALLFL) is removed in mature form.

It is found in the cell membrane. In terms of biological role, putative adhesin which may be involved in cell adhesion and virulence. The chain is Probable GPI-anchored adhesin-like protein PGA22 (PGA22) from Candida albicans (strain SC5314 / ATCC MYA-2876) (Yeast).